Consider the following 373-residue polypeptide: Lipoyl amidotransferase LIPT1, mitochondrial (373 aa).

A mitochondrion-targeting transit peptide spans M1–K25. Residues L57 to N243 form the BPL/LPL catalytic domain. The (R)-lipoyl-5'-AMP site is built by Y107, R151, K161, T179, T208, and A210.

This sequence belongs to the LplA family.

Its subcellular location is the mitochondrion. The catalysed reaction is N(6)-[(R)-lipoyl]-L-lysyl-[glycine-cleavage complex H protein] + L-lysyl-[lipoyl-carrier protein] = L-lysyl-[glycine-cleavage complex H protein] + N(6)-[(R)-lipoyl]-L-lysyl-[lipoyl-carrier protein]. It catalyses the reaction (R)-lipoyl-5'-AMP + L-lysyl-[lipoyl-carrier protein] = N(6)-[(R)-lipoyl]-L-lysyl-[lipoyl-carrier protein] + AMP + 2 H(+). It functions in the pathway protein modification; protein lipoylation via exogenous pathway; protein N(6)-(lipoyl)lysine from lipoate: step 2/2. Inhibited by lipoyl-AMP analogs including hexanoyl-, octanoyl- and decanoyl-AMP. Functionally, lipoyl amidotransferase that catalyzes the transfer of lipoyl moieties from lipoyl-protein H of the glycine cleavage system (lipoyl-GCSH) to E2 subunits of the pyruvate dehydrogenase complex (PDCE2). Unable to catalyze the transfer of octanoyl from octanoyl-GCSH to PDCE2. In vitro, it is also able to catalyze the transfer of the lipoyl group from lipoyl-AMP to the specific lysine residue of lipoyl domains of lipoate-dependent enzymes but this reaction may not be physiologically relevant. The protein is Lipoyl amidotransferase LIPT1, mitochondrial (LIPT1) of Bos taurus (Bovine).